A 118-amino-acid chain; its full sequence is Basic phospholipase A2 3 (118 aa).

Cystine bridges form between Cys-11/Cys-71, Cys-27/Cys-117, Cys-29/Cys-45, Cys-44/Cys-98, Cys-51/Cys-91, Cys-60/Cys-84, and Cys-78/Cys-89. Ca(2+)-binding residues include Tyr-28, Gly-30, and Gly-32. The active site involves His-48. A Ca(2+)-binding site is contributed by Asp-49. The active site involves Asp-92.

Belongs to the phospholipase A2 family. Group I subfamily. D49 sub-subfamily. As to quaternary structure, monomer. Requires Ca(2+) as cofactor. In terms of tissue distribution, expressed by the venom gland.

Its subcellular location is the secreted. The catalysed reaction is a 1,2-diacyl-sn-glycero-3-phosphocholine + H2O = a 1-acyl-sn-glycero-3-phosphocholine + a fatty acid + H(+). Functionally, PLA2 catalyzes the calcium-dependent hydrolysis of the 2-acyl groups in 3-sn-phosphoglycerides. The chain is Basic phospholipase A2 3 from Laticauda semifasciata (Black-banded sea krait).